Here is a 445-residue protein sequence, read N- to C-terminus: Oxysterols receptor LXR-alpha (445 aa).

2 disordered regions span residues 1–34 (MSLW…QGGN) and 62–86 (TALL…KKGP). The transactivation AF-1; required for ligand-independent transactivation function stretch occupies residues 1–94 (MSLWLEAAVP…GPAPKMLGNE (94 aa)). Residues 93–168 (NELCSVCGDK…AGMREECVLS (76 aa)) constitute a DNA-binding region (nuclear receptor). NR C4-type zinc fingers lie at residues 96 to 116 (CSVC…CEGC) and 132 to 156 (CHSG…LRKC). The interval 178–200 (KRQEEEQAQATSVSPRVSSPPQV) is disordered. A compositionally biased stretch (low complexity) spans 189–200 (SVSPRVSSPPQV). Ser-191 carries the phosphoserine modification. The tract at residues 203–445 (QLSPEQLGMI…LLSEIWDVHE (243 aa)) is transactivation AF-2; required for ligand-dependent transactivation function; mediates interaction with CCAR2. The NR LBD domain occupies 207-445 (EQLGMIEKLV…LLSEIWDVHE (239 aa)).

The protein belongs to the nuclear hormone receptor family. NR1 subfamily. Heterodimer of NR1H3 and RXR (retinoic acid receptor). Interacts with CCAR2 (via N-terminus) in a ligand-independent manner. Interacts with SIRT1 and this interaction is inhibited by CCAR2. Ubiquitinated by UBR5, leading to its degradation: UBR5 specifically recognizes and binds ligand-bound NR1H3 when it is not associated with coactivators (NCOAs). In presence of NCOAs, the UBR5-degron is not accessible, preventing its ubiquitination and degradation. As to expression, in adults it is expressed in spleen, pituitary, lung, liver, and fat. Weaker expression is observed in several other tissues.

The protein localises to the nucleus. Its subcellular location is the cytoplasm. Nuclear receptor that exhibits a ligand-dependent transcriptional activation activity. Interaction with retinoic acid receptor (RXR) shifts RXR from its role as a silent DNA-binding partner to an active ligand-binding subunit in mediating retinoid responses through target genes defined by LXRES. LXRES are DR4-type response elements characterized by direct repeats of two similar hexanuclotide half-sites spaced by four nucleotides. Plays an important role in the regulation of cholesterol homeostasis, regulating cholesterol uptake through MYLIP-dependent ubiquitination of LDLR, VLDLR and LRP8. Interplays functionally with RORA for the regulation of genes involved in liver metabolism. Induces LPCAT3-dependent phospholipid remodeling in endoplasmic reticulum (ER) membranes of hepatocytes, driving SREBF1 processing and lipogenesis. Via LPCAT3, triggers the incorporation of arachidonate into phosphatidylcholines of ER membranes, increasing membrane dynamics and enabling triacylglycerols transfer to nascent very low-density lipoprotein (VLDL) particles. Via LPCAT3 also counteracts lipid-induced ER stress response and inflammation, likely by modulating SRC kinase membrane compartmentalization and limiting the synthesis of lipid inflammatory mediators. This Rattus norvegicus (Rat) protein is Oxysterols receptor LXR-alpha (Nr1h3).